We begin with the raw amino-acid sequence, 1430 residues long: Target of rapamycin complex 2 subunit TSC11 (1430 aa).

The interval 1–62 (MSIPHSAKQS…TITNESSKRN (62 aa)) is disordered. 2 stretches are compositionally biased toward polar residues: residues 7 to 26 (AKQSSPLSSRRRSVTNTTPL) and 35 to 44 (NSSTQISSAK). The residue at position 19 (S19) is a Phosphoserine. The segment covering 45 to 57 (NITSSSPSTITNE) has biased composition (low complexity). Phosphoserine occurs at positions 81, 84, 87, and 141. A coiled-coil region spans residues 91 to 180 (ARRTRSTMTK…EKHIFDLKQQ (90 aa)). Positions 182–285 (DKKRQRSLTT…NLTGDTEKDL (104 aa)) are disordered. A compositionally biased stretch (polar residues) spans 233–265 (TTPTSGTERNSQQNLNRNSTVNSRNNENHSTLS). The N-terminal Ras-GEF domain occupies 995–1100 (SVVAVADQAL…FQQKSRLPLH (106 aa)).

It belongs to the RICTOR family. As to quaternary structure, the target of rapamycin complex 2 (TORC2) is composed of at least AVO1, AVO2, BIT61, LST8, TOR2 and TSC11. TORC2 forms a homodimer. Contrary to TORC1, TORC2 does not bind to and is not sensitive to FKBP-rapamycin. TSC11 binds to the N-terminal HEAT repeat region in TOR2 and is required for TORC2 integrity by tethering AVO1 and AVO2 to the complex. Phosphorylated by TOR2; when part of TORC2.

The protein resides in the cell membrane. It localises to the vacuole membrane. In terms of biological role, essential component of TORC2, which regulates cell cycle-dependent polarization of the actin-cytoskeleton and cell wall integrity. TORC2 controls polarity of the actin cytoskeleton, which is required for orienting the secretory pathway toward discrete growth sites, via the RHO1/PKC1/MAPK cell integrity pathway. TSC11 may exert its functions through two distinct mechanisms, one mediated by AVO1 and the other mediated by AVO2 and SLM1. The sequence is that of Target of rapamycin complex 2 subunit TSC11 (TSC11) from Saccharomyces cerevisiae (strain ATCC 204508 / S288c) (Baker's yeast).